The chain runs to 511 residues: MESLKNNDERIENFLNELKNLQSNIDKDIKEFSNSPNTSNAEKDGKFLSKHDEELYNKQIIRLTQEDRISNLSSLINSNIEDSFLLAYQTILNNLPGVGPVFQMIFGIMGNGIDLEKFYKEIIAQVEKMIKKSLEDYFKNQCNIIFNNLGKACDQHKELTQKWYDNHGIRSMNHLGEEIPQSSSTIESDETLTPMIHASYLDLKMKFNDALTYFTDSKYRGHVAPLLTYTSVMYFAFLRDILKYGKEMKFDNSIIDGTANTPGIKKISNDFVNKSLSEFLKSGVEYTKVVNSLQEGEWQTYPPPIGRVWVPPVPIEWVSPPATSLALKFFLANTDNYPKGGKVVKVTNGYYELSPIKMTYALEVYYSSGHGYSVNYYPSYRFGGKPILPLIAPVVNTLFTMLNPNRFSRTFKIRITHKIVREAKWNLDFFDNEVGEAGSFNQKFVFTSTTSHINPICDKSETAGVTEIPGPFTTDKKYIRLTCIRKFNLQEPKNEGYAYGSSIFSVELIDL.

The protein to D.discoideum protein M3R.

The protein is cAMP-regulated M3L protein (prtA) of Dictyostelium discoideum (Social amoeba).